Consider the following 200-residue polypeptide: Protein Rv0461 (200 aa).

A disordered region spans residues 47–67 (DRAGKSWPGSTPKPQEDPVGV). A run of 3 helical transmembrane segments spans residues 102–122 (FVLVVLGVWIGAGEVGLSLFY), 134–154 (VFVVLVYVVACTVGGLILALV), and 159–179 (LITALSLGVMSGPFASVAAAA).

The protein localises to the cell membrane. This Mycobacterium tuberculosis (strain ATCC 25618 / H37Rv) protein is Protein Rv0461.